Consider the following 394-residue polypeptide: Olfactomedin-like protein 3B (394 aa).

The signal sequence occupies residues methionine 1–serine 18. A coiled-coil region spans residues leucine 29–aspartate 94. The region spanning valine 132 to lysine 383 is the Olfactomedin-like domain. The cysteines at positions 133 and 310 are disulfide-linked. N-linked (GlcNAc...) asparagine glycosylation is found at asparagine 169, asparagine 204, and asparagine 233.

Belongs to the OLFML3 family.

It localises to the secreted. Its function is as follows. Secreted scaffold protein that plays an essential role in dorsoventral patterning during early development. Stabilizes axial formation by restricting chordin (CHRD) activity on the dorsal side. Acts by facilitating the association between the tolloid proteases and their substrate chordin (CHRD), leading to enhance chordin (CHRD) degradation. The protein is Olfactomedin-like protein 3B (olfml3b) of Danio rerio (Zebrafish).